A 245-amino-acid chain; its full sequence is Large ribosomal subunit protein uL3 (245 aa).

Gln-152 bears the N5-methylglutamine mark. The disordered stretch occupies residues 224-245 (RSKAVQAEAAAPAEAAAPEGDN). Residues 230-245 (AEAAAPAEAAAPEGDN) are compositionally biased toward low complexity.

The protein belongs to the universal ribosomal protein uL3 family. In terms of assembly, part of the 50S ribosomal subunit. Forms a cluster with proteins L14 and L19. Methylated by PrmB.

Functionally, one of the primary rRNA binding proteins, it binds directly near the 3'-end of the 23S rRNA, where it nucleates assembly of the 50S subunit. The polypeptide is Large ribosomal subunit protein uL3 (Paracoccus denitrificans (strain Pd 1222)).